Consider the following 203-residue polypeptide: N-(5'-phosphoribosyl)anthranilate isomerase (203 aa).

Belongs to the TrpF family.

The enzyme catalyses N-(5-phospho-beta-D-ribosyl)anthranilate = 1-(2-carboxyphenylamino)-1-deoxy-D-ribulose 5-phosphate. Its pathway is amino-acid biosynthesis; L-tryptophan biosynthesis; L-tryptophan from chorismate: step 3/5. In Caldanaerobacter subterraneus subsp. tengcongensis (strain DSM 15242 / JCM 11007 / NBRC 100824 / MB4) (Thermoanaerobacter tengcongensis), this protein is N-(5'-phosphoribosyl)anthranilate isomerase.